The primary structure comprises 104 residues: Ig kappa chain V region XP-1 (104 aa).

Residues 1–24 (ADIVMTQTPASVSEPVGGTVTIKC) are framework-1. The interval 25 to 35 (QASQSIFBBLA) is complementarity-determining-1. The segment at 36–49 (WYQKPGZPPKGLLY) is framework-2. The complementarity-determining-2 stretch occupies residues 50–56 (TBYTLAS). Positions 57–88 (GVSSRFSGGGSGTBFTLTISDLECABAATYYC) are framework-3. The segment at 89–100 (EXTGVSZBXBKG) is complementarity-determining-3. The interval 101 to 104 (FGGG) is framework-4.

The protein is Ig kappa chain V region XP-1 of Oryctolagus cuniculus (Rabbit).